The primary structure comprises 144 residues: Superoxide dismutase [Mn] 1 (144 aa).

Mn(2+) is bound by residues H42, D124, and H128.

Belongs to the iron/manganese superoxide dismutase family. It depends on Mn(2+) as a cofactor.

It catalyses the reaction 2 superoxide + 2 H(+) = H2O2 + O2. In terms of biological role, destroys superoxide anion radicals which are normally produced within the cells and which are toxic to biological systems. This chain is Superoxide dismutase [Mn] 1 (sod1), found in Haloferax mediterranei (Halobacterium mediterranei).